The following is a 347-amino-acid chain: Protein N-terminal asparagine amidohydrolase (347 aa).

It carries out the reaction N-terminal L-asparaginyl-[protein] + H2O + H(+) = N-terminal L-aspartyl-[protein] + NH4(+). Its function is as follows. N-terminal asparagine deamidase that mediates deamidation of N-terminal asparagine residues to aspartate. Required for the ubiquitin-dependent turnover of intracellular proteins that initiate with Met-Asn. These proteins are acetylated on the retained initiator methionine and can subsequently be modified by the removal of N-acetyl methionine by acylaminoacid hydrolase (AAH). Conversion of the resulting N-terminal asparagine to aspartate by NTAN1 renders the protein susceptible to arginylation, polyubiquitination and degradation as specified by the N-end rule. This enzyme does not act on substrates with internal or C-terminal asparagines and does not act on glutamine residues in any position. Does not seem to be involved in immune response, unlike the N-terminal glutamine amidohydrolase NTAQ1. In Arabidopsis thaliana (Mouse-ear cress), this protein is Protein N-terminal asparagine amidohydrolase.